Here is a 162-residue protein sequence, read N- to C-terminus: NADH-quinone oxidoreductase subunit I (162 aa).

4Fe-4S ferredoxin-type domains follow at residues 53–83 (LRRY…IEAE) and 93–122 (TRYD…EGPN). Positions 63, 66, 69, 73, 102, 105, 108, and 112 each coordinate [4Fe-4S] cluster.

This sequence belongs to the complex I 23 kDa subunit family. As to quaternary structure, NDH-1 is composed of 14 different subunits. Subunits NuoA, H, J, K, L, M, N constitute the membrane sector of the complex. The cofactor is [4Fe-4S] cluster.

It localises to the cell inner membrane. The catalysed reaction is a quinone + NADH + 5 H(+)(in) = a quinol + NAD(+) + 4 H(+)(out). NDH-1 shuttles electrons from NADH, via FMN and iron-sulfur (Fe-S) centers, to quinones in the respiratory chain. The immediate electron acceptor for the enzyme in this species is believed to be ubiquinone. Couples the redox reaction to proton translocation (for every two electrons transferred, four hydrogen ions are translocated across the cytoplasmic membrane), and thus conserves the redox energy in a proton gradient. The chain is NADH-quinone oxidoreductase subunit I from Rhodospirillum rubrum (strain ATCC 11170 / ATH 1.1.1 / DSM 467 / LMG 4362 / NCIMB 8255 / S1).